Here is a 701-residue protein sequence, read N- to C-terminus: Larval serum protein 2 (701 aa).

A signal peptide spans M1–A21. N204 carries an N-linked (GlcNAc...) asparagine glycan.

Belongs to the hemocyanin family. Homohexamer.

Its subcellular location is the secreted. It localises to the extracellular space. Its function is as follows. Larval storage protein (LSP) which may serve as a store of amino acids for synthesis of adult proteins. This Drosophila melanogaster (Fruit fly) protein is Larval serum protein 2 (Lsp2).